A 446-amino-acid polypeptide reads, in one-letter code: N-succinylarginine dihydrolase 2 (446 aa).

Residues 20 to 29 (VGLSPGNLAS), N111, and 138 to 139 (HR) each bind substrate. Residue E175 is part of the active site. Substrate is bound at residue R212. H246 is a catalytic residue. The substrate site is built by D248 and N361. C367 serves as the catalytic Nucleophile.

This sequence belongs to the succinylarginine dihydrolase family. As to quaternary structure, homodimer.

The enzyme catalyses N(2)-succinyl-L-arginine + 2 H2O + 2 H(+) = N(2)-succinyl-L-ornithine + 2 NH4(+) + CO2. It participates in amino-acid degradation; L-arginine degradation via AST pathway; L-glutamate and succinate from L-arginine: step 2/5. Functionally, catalyzes the hydrolysis of N(2)-succinylarginine into N(2)-succinylornithine, ammonia and CO(2). This Caulobacter vibrioides (strain ATCC 19089 / CIP 103742 / CB 15) (Caulobacter crescentus) protein is N-succinylarginine dihydrolase 2.